We begin with the raw amino-acid sequence, 45 residues long: Large ribosomal subunit protein bL34 (45 aa).

Residues 1–45 (MTKRTFQPNNRRRARKHGFRARMRTRAGRAILSARRGKNRAELSA) form a disordered region. The segment covering 10 to 27 (NRRRARKHGFRARMRTRA) has biased composition (basic residues).

The protein belongs to the bacterial ribosomal protein bL34 family.

This Micrococcus luteus (strain ATCC 4698 / DSM 20030 / JCM 1464 / CCM 169 / CCUG 5858 / IAM 1056 / NBRC 3333 / NCIMB 9278 / NCTC 2665 / VKM Ac-2230) (Micrococcus lysodeikticus) protein is Large ribosomal subunit protein bL34.